The primary structure comprises 289 residues: ATP synthase gamma chain (289 aa).

It belongs to the ATPase gamma chain family. As to quaternary structure, F-type ATPases have 2 components, CF(1) - the catalytic core - and CF(0) - the membrane proton channel. CF(1) has five subunits: alpha(3), beta(3), gamma(1), delta(1), epsilon(1). CF(0) has three main subunits: a, b and c.

Its subcellular location is the cell inner membrane. In terms of biological role, produces ATP from ADP in the presence of a proton gradient across the membrane. The gamma chain is believed to be important in regulating ATPase activity and the flow of protons through the CF(0) complex. The sequence is that of ATP synthase gamma chain from Haemophilus influenzae (strain PittGG).